The following is a 324-amino-acid chain: NADH-ubiquinone oxidoreductase chain 1 (324 aa).

8 consecutive transmembrane segments (helical) span residues 3 to 23, 73 to 93, 106 to 126, 151 to 171, 175 to 195, 226 to 246, 255 to 275, and 295 to 315; these read LLFMYLLPLLYIAPILLAVAF, LLFILAPTLALALAMIMWTPF, ILFILAISSLTVYTILGSGWA, ALIILCSVLLAGGFTLSAFAI, FTWFILPLWPMFLMWFVSTLA, LFFLAEYANILMMNTLSTIIF, TLTTSLLMTKASILSLCFLWV, and FLPLTLALVILYVSMPISLLF.

This sequence belongs to the complex I subunit 1 family.

The protein localises to the mitochondrion inner membrane. The enzyme catalyses a ubiquinone + NADH + 5 H(+)(in) = a ubiquinol + NAD(+) + 4 H(+)(out). Its function is as follows. Core subunit of the mitochondrial membrane respiratory chain NADH dehydrogenase (Complex I) that is believed to belong to the minimal assembly required for catalysis. Complex I functions in the transfer of electrons from NADH to the respiratory chain. The immediate electron acceptor for the enzyme is believed to be ubiquinone. The sequence is that of NADH-ubiquinone oxidoreductase chain 1 (MT-ND1) from Aquarana catesbeiana (American bullfrog).